A 429-amino-acid chain; its full sequence is Bifunctional phosphoribosylaminoimidazole carboxylase/phosphoribosylaminoimidazole succinocarboxamide synthetase (429 aa).

Residues 7-264 (ASIEGYKLGK…WVAEQLADIV (258 aa)) are SAICAR synthetase. The SAICAR synthetase domain stretch occupies residues 7-264 (ASIEGYKLGK…WVAEQLADIV (258 aa)). The AIR carboxylase stretch occupies residues 265-429 (PKKDHLVVIL…DKELRGVRNA (165 aa)). Residues 270–429 (LVVILMGSAS…DKELRGVRNA (160 aa)) are AIR carboxylase domain. Ser335 lines the CO2 pocket.

In the N-terminal section; belongs to the SAICAR synthetase family. The protein in the C-terminal section; belongs to the AIR carboxylase family. Class II subfamily. As to quaternary structure, homooctamer.

It carries out the reaction 5-amino-1-(5-phospho-D-ribosyl)imidazole-4-carboxylate + L-aspartate + ATP = (2S)-2-[5-amino-1-(5-phospho-beta-D-ribosyl)imidazole-4-carboxamido]succinate + ADP + phosphate + 2 H(+). The enzyme catalyses 5-amino-1-(5-phospho-D-ribosyl)imidazole-4-carboxylate + H(+) = 5-amino-1-(5-phospho-beta-D-ribosyl)imidazole + CO2. It participates in purine metabolism; IMP biosynthesis via de novo pathway; 5-amino-1-(5-phospho-D-ribosyl)imidazole-4-carboxamide from 5-amino-1-(5-phospho-D-ribosyl)imidazole-4-carboxylate: step 1/2. It functions in the pathway purine metabolism; IMP biosynthesis via de novo pathway; 5-amino-1-(5-phospho-D-ribosyl)imidazole-4-carboxylate from 5-amino-1-(5-phospho-D-ribosyl)imidazole (carboxylase route): step 1/1. Bifunctional phosphoribosylaminoimidazole carboxylase and phosphoribosylaminoimidazole succinocarboxamide synthetase catalyzing two reactions of the de novo purine biosynthetic pathway. This Drosophila melanogaster (Fruit fly) protein is Bifunctional phosphoribosylaminoimidazole carboxylase/phosphoribosylaminoimidazole succinocarboxamide synthetase.